Here is a 177-residue protein sequence, read N- to C-terminus: Small ribosomal subunit protein uS5 (177 aa).

Positions 14 to 77 (LQEKLITVNR…EKARHNMIDI (64 aa)) constitute an S5 DRBM domain.

The protein belongs to the universal ribosomal protein uS5 family. In terms of assembly, part of the 30S ribosomal subunit. Contacts proteins S4 and S8.

Functionally, with S4 and S12 plays an important role in translational accuracy. Its function is as follows. Located at the back of the 30S subunit body where it stabilizes the conformation of the head with respect to the body. This Blochmanniella floridana protein is Small ribosomal subunit protein uS5.